We begin with the raw amino-acid sequence, 386 residues long: Antilisterial bacteriocin subtilosin biosynthesis protein AlbE (386 aa).

Involved in the production of the bacteriocin subtilosin. This Bacillus subtilis protein is Antilisterial bacteriocin subtilosin biosynthesis protein AlbE (albE).